The chain runs to 177 residues: Small ribosomal subunit protein bS21m (177 aa).

The transit peptide at 1–17 directs the protein to the mitochondrion; sequence MLKSTLRLSRISLRRGF.

It belongs to the bacterial ribosomal protein bS21 family. Component of the mitochondrial small ribosomal subunit (mt-SSU). Mature yeast 74S mitochondrial ribosomes consist of a small (37S) and a large (54S) subunit. The 37S small subunit contains a 15S ribosomal RNA (15S mt-rRNA) and 34 different proteins. The 54S large subunit contains a 21S rRNA (21S mt-rRNA) and 46 different proteins.

The protein resides in the mitochondrion. Its function is as follows. Component of the mitochondrial ribosome (mitoribosome), a dedicated translation machinery responsible for the synthesis of mitochondrial genome-encoded proteins, including at least some of the essential transmembrane subunits of the mitochondrial respiratory chain. The mitoribosomes are attached to the mitochondrial inner membrane and translation products are cotranslationally integrated into the membrane. The polypeptide is Small ribosomal subunit protein bS21m (MRP21) (Saccharomyces cerevisiae (strain ATCC 204508 / S288c) (Baker's yeast)).